Here is a 239-residue protein sequence, read N- to C-terminus: Transcriptional regulatory protein BtsR (239 aa).

The Response regulatory domain maps to K3–R116. 4-aspartylphosphate is present on D54. An HTH LytTR-type domain is found at I137–L239.

In terms of processing, phosphorylated by BtsS.

Member of the two-component regulatory system BtsS/BtsR. BtsR regulates expression of btsT by binding to its promoter region. This chain is Transcriptional regulatory protein BtsR, found in Salmonella typhi.